Here is a 225-residue protein sequence, read N- to C-terminus: Ribonuclease HII (225 aa).

Residues 28–220 enclose the RNase H type-2 domain; the sequence is DIIAGTDEVG…VKEYVDISQE (193 aa). Residues Asp-34, Glu-35, and Asp-129 each contribute to the a divalent metal cation site.

It belongs to the RNase HII family. Requires Mn(2+) as cofactor. It depends on Mg(2+) as a cofactor.

It is found in the cytoplasm. It catalyses the reaction Endonucleolytic cleavage to 5'-phosphomonoester.. In terms of biological role, endonuclease that specifically degrades the RNA of RNA-DNA hybrids. The chain is Ribonuclease HII from Desulfotalea psychrophila (strain LSv54 / DSM 12343).